Here is a 401-residue protein sequence, read N- to C-terminus: Type 3 secretion system translocon protein SctE (401 aa).

A coiled-coil region spans residues 129–160; that stretch reads IQRLHEQNMKKIEENQEKIKETEENAKQVKKS. The next 2 helical transmembrane spans lie at 176–196 and 224–244; these read VIVG…AMMV and ILGP…TVMT. The stretch at 345–379 forms a coiled coil; the sequence is LALNKADMAALQSIIDRLKEELSHLSESHQQVMEL.

The protein belongs to the SctE/SipB/YopB family. In terms of assembly, the core secretion machinery of the T3SS is composed of approximately 20 different proteins, including cytoplasmic components, a base, an export apparatus and a needle. This subunit is involved in the formation of a pore, called the translocon, in host membrane. Interacts with YopD/SctB. Together with YopD/SctB, forms a multimeric integral membrane complex.

It localises to the secreted. Its subcellular location is the host membrane. Component of the type III secretion system (T3SS), also called injectisome, which is used to inject bacterial effector proteins into eukaryotic host cells. YopB/SctE and YopD/SctB are inserted into the host membrane where they form a pore and allow the translocation of effector proteins into the cytosol of target cells. Is an essential virulence determinant. Required for YopE and YopH translocation. Shows membrane disruptive activity in vitro. Its function is as follows. Interaction with the host cell triggers a signaling response, via activation of the small GTPase Ras, the MAPK kinases ERK and JNK and the nuclear factor NF-kappa-B pathways, and production of the proinflammatory cytokine interleukin-8 (IL-8). YopB/SctE-dependent signaling response is counteracted by YopE, YopH and YopJ in infected host cells. YopB/SctE is directly responsible for signaling and its insertion in the membrane is important to activate the signaling response in the host cell. The chain is Type 3 secretion system translocon protein SctE from Yersinia pseudotuberculosis serotype I (strain IP32953).